The sequence spans 128 residues: Holo-[acyl-carrier-protein] synthase (128 aa).

The Mg(2+) site is built by D8 and E57.

This sequence belongs to the P-Pant transferase superfamily. AcpS family. The cofactor is Mg(2+).

Its subcellular location is the cytoplasm. The catalysed reaction is apo-[ACP] + CoA = holo-[ACP] + adenosine 3',5'-bisphosphate + H(+). In terms of biological role, transfers the 4'-phosphopantetheine moiety from coenzyme A to a Ser of acyl-carrier-protein. The polypeptide is Holo-[acyl-carrier-protein] synthase (Syntrophus aciditrophicus (strain SB)).